A 264-amino-acid polypeptide reads, in one-letter code: Myozenin-2 (264 aa).

Residue Arg53 is modified to Omega-N-methylarginine. The disordered stretch occupies residues 90–135 (GRVDGSNLEGGSQQGPSTPPNTPDPRSPPNPENIAPGYSGPLKEIP). Ser101 is subject to Phosphoserine. A compositionally biased stretch (pro residues) spans 106–120 (STPPNTPDPRSPPNP). Residues Thr107 and Thr111 each carry the phosphothreonine modification. Ser116 carries the phosphoserine modification.

This sequence belongs to the myozenin family. Interacts via its C-terminus with spectrin repeats 3 and 4 of ACTN2. Interacts with ACTN1, LDB3, MYOT and PPP3CA. Expressed specifically in heart and skeletal muscle. In skeletal muscle, localized to the soleus and plantaris muscles, which are predominantly composed of slow-twitch fibers.

The protein localises to the cytoplasm. It localises to the myofibril. It is found in the sarcomere. Its subcellular location is the z line. Its function is as follows. Myozenins may serve as intracellular binding proteins involved in linking Z line proteins such as alpha-actinin, gamma-filamin, TCAP/telethonin, LDB3/ZASP and localizing calcineurin signaling to the sarcomere. Plays an important role in the modulation of calcineurin signaling. May play a role in myofibrillogenesis. This Mus musculus (Mouse) protein is Myozenin-2.